A 295-amino-acid chain; its full sequence is Acetylglutamate kinase (295 aa).

Residues 66–67 (GG), arginine 88, and asparagine 193 contribute to the substrate site.

This sequence belongs to the acetylglutamate kinase family. ArgB subfamily.

The protein localises to the cytoplasm. The enzyme catalyses N-acetyl-L-glutamate + ATP = N-acetyl-L-glutamyl 5-phosphate + ADP. Its pathway is amino-acid biosynthesis; L-arginine biosynthesis; N(2)-acetyl-L-ornithine from L-glutamate: step 2/4. Catalyzes the ATP-dependent phosphorylation of N-acetyl-L-glutamate. This Sinorhizobium medicae (strain WSM419) (Ensifer medicae) protein is Acetylglutamate kinase.